We begin with the raw amino-acid sequence, 316 residues long: Ribosomal RNA small subunit methyltransferase H (316 aa).

S-adenosyl-L-methionine is bound by residues 35–37, Asp55, Phe79, Asp101, and Gln108; that span reads GGH. Positions 291–316 are disordered; sequence ALKPSDQEVELNPRSRSSVLRVAEKL.

This sequence belongs to the methyltransferase superfamily. RsmH family.

Its subcellular location is the cytoplasm. The catalysed reaction is cytidine(1402) in 16S rRNA + S-adenosyl-L-methionine = N(4)-methylcytidine(1402) in 16S rRNA + S-adenosyl-L-homocysteine + H(+). Its function is as follows. Specifically methylates the N4 position of cytidine in position 1402 (C1402) of 16S rRNA. In Vibrio cholerae serotype O1 (strain ATCC 39315 / El Tor Inaba N16961), this protein is Ribosomal RNA small subunit methyltransferase H.